Reading from the N-terminus, the 78-residue chain is Probable [Fe-S]-dependent transcriptional repressor (78 aa).

Residues Cys-56, Cys-61, Cys-64, and Cys-70 each contribute to the iron-sulfur cluster site.

It belongs to the FeoC family.

Its function is as follows. May function as a transcriptional regulator that controls feoABC expression. In Citrobacter koseri (strain ATCC BAA-895 / CDC 4225-83 / SGSC4696), this protein is Probable [Fe-S]-dependent transcriptional repressor.